The following is a 465-amino-acid chain: Argininosuccinate lyase (465 aa).

The protein belongs to the lyase 1 family. Argininosuccinate lyase subfamily.

The protein localises to the cytoplasm. It carries out the reaction 2-(N(omega)-L-arginino)succinate = fumarate + L-arginine. Its pathway is amino-acid biosynthesis; L-arginine biosynthesis; L-arginine from L-ornithine and carbamoyl phosphate: step 3/3. This is Argininosuccinate lyase from Deinococcus geothermalis (strain DSM 11300 / CIP 105573 / AG-3a).